Reading from the N-terminus, the 332-residue chain is D-glutamate N-acetyltransferase (332 aa).

This sequence belongs to the N-acetyltransferase DgcN family.

It catalyses the reaction D-glutamate + acetyl-CoA = N-acetyl-D-glutamate + CoA + H(+). It carries out the reaction D-aspartate + acetyl-CoA = N-acetyl-D-aspartate + CoA + H(+). The catalysed reaction is D-glutamine + acetyl-CoA = N-acetyl-D-glutamine + CoA + H(+). The protein operates within amino-acid degradation. Functionally, N-acetyltransferase involved in a deamination-independent D-glutamate degradation pathway, named the DgcN-DgcA pathway. Catalyzes the transfer of the acetyl moiety from acetyl-CoA to D-glutamate to generate N-acetyl-D-glutamate. Can also acetylate D-aspartate and D-glutamine, with lower efficiency. Has low activity with D-asparagine. Cannot use succinyl-CoA. The chain is D-glutamate N-acetyltransferase from Pseudoalteromonas sp.